The sequence spans 596 residues: Elongation factor 4 (596 aa).

A tr-type G domain is found at 2–183 (KNIRNFSIIA…EIIRRIPAPN (182 aa)). Residues 14-19 (DHGKST) and 130-133 (NKID) each bind GTP.

Belongs to the TRAFAC class translation factor GTPase superfamily. Classic translation factor GTPase family. LepA subfamily.

It is found in the cell inner membrane. The catalysed reaction is GTP + H2O = GDP + phosphate + H(+). Functionally, required for accurate and efficient protein synthesis under certain stress conditions. May act as a fidelity factor of the translation reaction, by catalyzing a one-codon backward translocation of tRNAs on improperly translocated ribosomes. Back-translocation proceeds from a post-translocation (POST) complex to a pre-translocation (PRE) complex, thus giving elongation factor G a second chance to translocate the tRNAs correctly. Binds to ribosomes in a GTP-dependent manner. The sequence is that of Elongation factor 4 from Wolinella succinogenes (strain ATCC 29543 / DSM 1740 / CCUG 13145 / JCM 31913 / LMG 7466 / NCTC 11488 / FDC 602W) (Vibrio succinogenes).